Reading from the N-terminus, the 192-residue chain is Glycerol-3-phosphate acyltransferase (192 aa).

The next 5 helical transmembrane spans lie at 3–23 (ALFL…EVIA), 51–71 (YGVL…LIAV), 80–100 (VLTF…FFGF), 112–132 (VVFA…LGIF), and 149–169 (AFLF…AIVI).

It belongs to the PlsY family. In terms of assembly, probably interacts with PlsX.

It localises to the cell inner membrane. The catalysed reaction is an acyl phosphate + sn-glycerol 3-phosphate = a 1-acyl-sn-glycero-3-phosphate + phosphate. The protein operates within lipid metabolism; phospholipid metabolism. Its function is as follows. Catalyzes the transfer of an acyl group from acyl-phosphate (acyl-PO(4)) to glycerol-3-phosphate (G3P) to form lysophosphatidic acid (LPA). This enzyme utilizes acyl-phosphate as fatty acyl donor, but not acyl-CoA or acyl-ACP. The sequence is that of Glycerol-3-phosphate acyltransferase from Aquifex aeolicus (strain VF5).